Here is a 608-residue protein sequence, read N- to C-terminus: Probable potassium transport system protein Kup (608 aa).

The next 12 membrane-spanning stretches (helical) occupy residues 9 to 29 (LSGV…TSPL), 46 to 66 (PAAI…VVSV), 99 to 119 (TPVL…EVVI), 137 to 157 (PSLD…LFAI), 165 to 185 (VGKL…VLGL), 213 to 233 (TSFF…ALYA), 247 to 267 (WFVV…ALLL), 285 to 305 (ALLP…QAVI), 337 to 357 (IYIP…IMSF), 363 to 383 (LAAA…ILFC), 396 to 416 (LVAA…AANL), and 419 to 439 (IFSG…LMTS).

It belongs to the HAK/KUP transporter (TC 2.A.72) family.

It is found in the cell inner membrane. It carries out the reaction K(+)(in) + H(+)(in) = K(+)(out) + H(+)(out). Its function is as follows. Transport of potassium into the cell. Likely operates as a K(+):H(+) symporter. The chain is Probable potassium transport system protein Kup from Aeromonas salmonicida (strain A449).